Consider the following 375-residue polypeptide: MAENAGFISVPWGQHKLGAMYNTPFPSISRPKCIGVCSINASREFVDDASCASYLAGQPWPPLPFDLNGGIEDVIRKPVENGKRDLEIMLTYIKQHQKELLRQSSSDARNLRLDSDFVTLRGILRQIMCLQYDNRSFRVKATLLNGNVYMCKEETPEQQLENANMSRAQRVMCSWGFKFEQYLTSAQAQGKPVTNVPVNEAEEFMGVYRTNLAGILMLYGAELDCVDSKEPVDFKDCRVLDSLKFVELKTSVFNMNPHQIRTFKSFKSANWWSQSFLVGITTLYVGLRDTKGMLQRIDEIDVATLARNKPWSASAMAWYLEQFLRNLKKLLVNINDPFAVVQVTFLNKHASYEVLRGPEHQILPNWYRDLLKTRS.

Substrate contacts are provided by residues Arg43 and 120-122; that span reads LRG. 5 residues coordinate Mg(2+): Glu180, Glu222, Asp224, Glu247, and Leu248. Residue Glu222 coordinates substrate. Substrate-binding residues include Lys249 and Gln274.

This sequence belongs to the DXO/Dom3Z family. In terms of assembly, interacts with Rat1. It depends on Mg(2+) as a cofactor.

The catalysed reaction is a 5'-end triphospho-ribonucleoside in mRNA + H2O = a 5'-end phospho-ribonucleoside in mRNA + diphosphate + H(+). It catalyses the reaction a 5'-end NAD(+)-phospho-ribonucleoside in mRNA + H2O = a 5'-end phospho-ribonucleoside in mRNA + NAD(+) + H(+). The enzyme catalyses a 5'-end (N(7)-methyl 5'-triphosphoguanosine)-ribonucleoside-ribonucleotide in mRNA + H2O = a (N(7)-methyl 5'-triphosphoguanosine)-nucleoside + a 5'-end phospho-ribonucleoside in mRNA + H(+). Functionally, decapping enzyme for NAD-capped RNAs: specifically hydrolyzes the nicotinamide adenine dinucleotide (NAD) cap from a subset of RNAs by removing the entire NAD moiety from the 5'-end of an NAD-capped RNA. The NAD-cap is present at the 5'-end of some RNAs and snoRNAs. In contrast to the canonical 5'-end N7 methylguanosine (m7G) cap, the NAD cap promotes mRNA decay. Also acts as a non-canonical decapping enzyme that removes the entire cap structure of m7G capped or incompletely capped RNAs and mediates their subsequent degradation. Specifically degrades pre-mRNAs with a defective 5'-end m7G cap and is part of a pre-mRNA capping quality control. Possesses 5'-pyrophosphohydrolase activity, hydrolyzing the 5'-end triphosphate to release pyrophosphates, and 5'-3' exonuclease activity. May be involved in RNA degradation in the nucleus. This is Decapping and exoribonuclease protein Rai1 from Drosophila melanogaster (Fruit fly).